Reading from the N-terminus, the 234-residue chain is Uridylate kinase (234 aa).

9–12 (KLSG) contributes to the ATP binding site. UMP is bound at residue Gly51. Positions 52 and 56 each coordinate ATP. UMP is bound by residues Asp71 and 132–139 (CGNPFFTT). 3 residues coordinate ATP: Thr159, Tyr165, and Asp168.

The protein belongs to the UMP kinase family. In terms of assembly, homohexamer.

The protein localises to the cytoplasm. It carries out the reaction UMP + ATP = UDP + ADP. It participates in pyrimidine metabolism; CTP biosynthesis via de novo pathway; UDP from UMP (UMPK route): step 1/1. Its activity is regulated as follows. Inhibited by UTP. Catalyzes the reversible phosphorylation of UMP to UDP. The sequence is that of Uridylate kinase from Prochlorococcus marinus (strain MIT 9301).